We begin with the raw amino-acid sequence, 377 residues long: Nitric oxide reductase FlRd-NAD(+) reductase (377 aa).

It belongs to the FAD-dependent oxidoreductase family. FAD is required as a cofactor.

It is found in the cytoplasm. It carries out the reaction 2 reduced [nitric oxide reductase rubredoxin domain] + NAD(+) + H(+) = 2 oxidized [nitric oxide reductase rubredoxin domain] + NADH. It functions in the pathway nitrogen metabolism; nitric oxide reduction. In terms of biological role, one of at least two accessory proteins for anaerobic nitric oxide (NO) reductase. Reduces the rubredoxin moiety of NO reductase. This chain is Nitric oxide reductase FlRd-NAD(+) reductase, found in Escherichia coli O81 (strain ED1a).